The following is a 337-amino-acid chain: Ferredoxin--NADP reductase (337 aa).

Glu42, Gln50, Tyr55, Val97, Phe130, Asp292, and Thr333 together coordinate FAD.

Belongs to the ferredoxin--NADP reductase type 2 family. Homodimer. Requires FAD as cofactor.

The enzyme catalyses 2 reduced [2Fe-2S]-[ferredoxin] + NADP(+) + H(+) = 2 oxidized [2Fe-2S]-[ferredoxin] + NADPH. This is Ferredoxin--NADP reductase from Streptococcus mutans serotype c (strain ATCC 700610 / UA159).